An 834-amino-acid chain; its full sequence is ATP-dependent DNA helicase fml1 (834 aa).

The Helicase ATP-binding domain maps to 80–248 (IVQKALFENV…NVIDSLHISR (169 aa)). 93 to 100 (LPTGLGKT) serves as a coordination point for ATP. The short motif at 196–199 (DEAH) is the DEAH box element. Residues 416–582 (HLERIVTEYF…GLSLSEKSYR (167 aa)) enclose the Helicase C-terminal domain. The segment at 650 to 690 (EESPFEICPVTYSIEQEKKLEKYKRVCLRGLDIHRNRRLSQ) is interaction with MHF complex. A disordered region spans residues 738-769 (NSTDRDTKQPKMHDFRQPLHPNPMTTLKRKGQ). Residues 740 to 754 (TDRDTKQPKMHDFRQ) are compositionally biased toward basic and acidic residues.

This sequence belongs to the DEAD box helicase family. DEAH subfamily. FANCM sub-subfamily.

It is found in the cytoplasm. The protein resides in the nucleus. It localises to the nucleolus. It carries out the reaction ATP + H2O = ADP + phosphate + H(+). Its function is as follows. ATP-dependent DNA helicase involved in DNA damage repair by homologous recombination and in genome maintenance. Capable of unwinding D-loops. Plays a role in limiting crossover recombination during mitotic DNA double-strand break (DSB) repair. Component of a FANCM-MHF complex which promotes gene conversion at blocked replication forks, probably by reversal of the stalled fork. FANCM-MHF also promotes non-crossover recombination in meiotic cells. This is ATP-dependent DNA helicase fml1 from Schizosaccharomyces pombe (strain 972 / ATCC 24843) (Fission yeast).